The following is a 106-amino-acid chain: Cell division topological specificity factor (106 aa).

Belongs to the MinE family.

In terms of biological role, prevents the cell division inhibition by proteins MinC and MinD at internal division sites while permitting inhibition at polar sites. This ensures cell division at the proper site by restricting the formation of a division septum at the midpoint of the long axis of the cell. The protein is Cell division topological specificity factor of Prochlorococcus marinus subsp. pastoris (strain CCMP1986 / NIES-2087 / MED4).